The sequence spans 1460 residues: Nucleoporin NUP159 (1460 aa).

The interval 1 to 500 (MSSLKDEVPT…SEQDATDPAS (500 aa)) is interaction with DBP5. An FG 1 repeat occupies 228 to 231 (AVFG). Residues 267–270 (PPFG) form a PXFG 1 repeat. The tract at residues 401-435 (KSLSPTSEKIPIAGQEQEEKKKNNESSKALSENPF) is disordered. Serine 404 carries the phosphoserine modification. One copy of the SXFGXPXFG 1 repeat lies at 462-470 (STFGAPSFG). The segment at 483–504 (STSTGVASSEQDATDPASAKPV) is disordered. The tract at residues 497 to 701 (DPASAKPVFG…KPNTSTKPKT (205 aa)) is interactions with CRM1 and GLE1. Residues 503–511 (PVFGKPAFG) form an SXFGXPXFG 2; approximate repeat. Residues 522 to 530 (YAFGKPSFG) form an SXFGXPXFG 3; approximate repeat. The PXFG 2 repeat unit spans residues 532–535 (PSFG). The disordered stretch occupies residues 533–619 (SFGSGKSSVE…SAFGTASSNE (87 aa)). Polar residues-rich tracts occupy residues 536–546 (SGKSSVESPAS), 556–567 (GTPSFGSGNSSV), 582–593 (GTPSFGSGNSSA), and 607–619 (FGTS…SSNE). The stretch at 548-556 (SAFGKPSFG) is one SXFGXPXFG 4 repeat. The stretch at 558-561 (PSFG) is one PXFG 3 repeat. An SXFGXPXFG 5 repeat occupies 574–582 (SAFGKPSFG). The stretch at 584–587 (PSFG) is one PXFG 4 repeat. The stretch at 600 to 608 (SAFGKPSFG) is one SXFGXPXFG 6 repeat. Residues 610–613 (SAFG) form an SXFG 1 repeat. The SXFGXPXFG 7; approximate repeat unit spans residues 624 to 632 (SIFGKAAFG). The stretch at 642-645 (ELFG) is one FG 2 repeat. The interval 647–704 (NFTISKPTVDSPKEVDSTSPFPSSGDQSEDESKSDVDSSSTPFGTKPNTSTKPKTNAF) is disordered. Serine 657 carries the post-translational modification Phosphoserine. Residues 683 to 704 (DSSSTPFGTKPNTSTKPKTNAF) show a composition bias toward low complexity. The FG 3 repeat unit spans residues 687–690 (TPFG). The FXFG 1 repeat unit spans residues 704–707 (FDFG). The stretch at 709-712 (SSFG) is one SXFG 2 repeat. Position 724 is a phosphoserine (serine 724). Polar residues-rich tracts occupy residues 727 to 750 (TFKF…FSSF), 757 to 767 (NGSLSKGSTSE), and 778 to 800 (NGPN…STRL). A disordered region spans residues 727 to 824 (TFKFGTQASP…EAQKSPIGKL (98 aa)). The stretch at 728–731 (FKFG) is one FXFG 2 repeat. Residues serine 735 and serine 745 each carry the phosphoserine modification. Phosphothreonine is present on threonine 803. Acidic residues predominate over residues 804–814 (PSDEDGEVVEE). Serine 805 and serine 819 each carry phosphoserine. The stretch at 842–845 (PVFG) is one PXFG 5 repeat. The segment covering 861–889 (TNITKPSSTTPAFSFGNSTMNKSNTSTVS) has biased composition (polar residues). Residues 861–1092 (TNITKPSSTT…DINTDELPHG (232 aa)) form a disordered region. Residues 873-876 (FSFG) form an FXFG 3 repeat. At serine 889 the chain carries Phosphoserine. Positions 917 to 936 (AKEERTGESSKKDHNDDPKD) are enriched in basic and acidic residues. Serine 940 bears the Phosphoserine mark. Residues 942–958 (SEISVRTSESAFDTTAN) are compositionally biased toward polar residues. 4 stretches are compositionally biased toward basic and acidic residues: residues 960-1002 (EIPK…KNNE), 1017-1027 (ALKKDNEKENF), 1035-1061 (QFED…KESD), and 1068-1092 (SDRD…LPHG). Residues 1086 to 1175 (TDELPHGGEA…TCNFSVQTFE (90 aa)) are interaction with DYN2. The tract at residues 1223-1460 (AEFTVLMENI…DFFKNLNMAK (238 aa)) is interaction with NUP82. Coiled coils occupy residues 1279–1320 (EQMQ…YLFL) and 1383–1418 (AKLA…GKKA).

In terms of assembly, component of the nuclear pore complex (NPC). NPC constitutes the exclusive means of nucleocytoplasmic transport. NPCs allow the passive diffusion of ions and small molecules and the active, nuclear transport receptor-mediated bidirectional transport of macromolecules such as proteins, RNAs, ribonucleoparticles (RNPs), and ribosomal subunits across the nuclear envelope. Due to its 8-fold rotational symmetry, all subunits are present with 8 copies or multiples thereof. Part of the NUP82 subcomplex, interacts with NUP82 through its C-terminal coiled coil. This subcomplex is the base for interactions with NUP116 and GLE2, with NUP42 and GLE1 and with DYN2. Interacts directly with DYN2. Interacts through its FG repeats with karyopherins, such as heterodimeric mRNA transport factor MEX67/MTR2, CRM1 (XPO1), and PSE1 (GSP1-GDP dependent). Interaction with CRM1 (XPO1) is GSP1-GTP dependent and stimulated by RNA1. NUP159 also interacts with GLE1 and the ATP-dependent RNA helicase DBP5.

The protein resides in the nucleus. Its subcellular location is the nuclear pore complex. The protein localises to the nucleus membrane. Functionally, functions as a component of the nuclear pore complex (NPC). NPC components, collectively referred to as nucleoporins (NUPs), can play the role of both NPC structural components and of docking or interaction partners for transiently associated nuclear transport factors. Active directional transport is assured by both, a Phe-Gly (FG) repeat affinity gradient for these transport factors across the NPC and a transport cofactor concentration gradient across the nuclear envelope (GSP1 and GSP2 GTPases associated predominantly with GTP in the nucleus, with GDP in the cytoplasm). NUP159 plays an important role in several nuclear export pathways including poly(A)+ RNA, pre-ribosome, and protein export. This chain is Nucleoporin NUP159 (NUP159), found in Saccharomyces cerevisiae (strain ATCC 204508 / S288c) (Baker's yeast).